A 259-amino-acid polypeptide reads, in one-letter code: UBX domain-containing protein 2A (259 aa).

A required for interaction with CHRNA3 region spans residues 1–151; it reads MKDVDNLKSI…SATPKIVSKA (151 aa). Positions 1–164 are required for inhibition of CHRNA3 ubiquitination and translocation of CHRNA3 to the plasma membrane resulting in an increase in acetylcholine-gated nicotinic acetylcholine receptor currents; sequence MKDVDNLKSI…EVENKNNLSA (164 aa). The 65-residue stretch at 60 to 124 folds into the SEP domain; sequence QVDVNIKLWK…VEDKKNEICL (65 aa). A required for interaction with VCP region spans residues 167–259; the sequence is LNNLEPITNI…TASFRELSEH (93 aa). A UBX domain is found at 169–246; that stretch reads NLEPITNIQI…DLQNAVIIQR (78 aa).

As to quaternary structure, part of a complex composed of STUB1/CHIP, VCP/p97, CHRNA3, and UBXN2A that modulates the ubiquitination and endoplasmic reticulum-associated degradation (ERAD) of CHRNA3. Within the complex UBXN2A acts as a scaffold protein required for the interaction of CHRNA3 with VCP/p97, this interaction also inhibits CHRNA3 ubiquitination by STUB1/CHIP and subsequently ERAD. Interacts (via SEP domain) with CHRNA3 and interacts (via UBX domain) with VCP/P97; these interactions are required for the interaction of CHRNA3 with the STUB1-VCP-UBXN2A complex. Interacts with HSPA9/MOT-2 (via SBD domain); the interaction inhibits HSPA9/MOT-2 interaction with and degradation of p53, thereby promotes p53 translocation to the nucleus. Interacts with RICTOR. Ubiquitinated. As to expression, expressed in the colon (at protein level).

Its subcellular location is the golgi apparatus. It is found in the endoplasmic reticulum. It localises to the perikaryon. The protein localises to the cell projection. The protein resides in the dendrite. Its subcellular location is the nucleus. It is found in the cytoplasm. Acts to repress the ubiquitination and subsequent endoplasmic reticulum-associated degradation of CHRNA3 by the STUB1-VCP-UBXN2A complex in cortical neurons. Also acts to promote the translocation of CHRNA3 to the plasma membrane and subsequently increases plasma membrane acetylcholine-gated ion-channel activation. Plays a role in the inhibition of STUB1-mediated TP53 degradation, via its interaction with HSPA9 which acts to inhibit TP53 binding to HSPA9. Positively mediates the ubiquitination and proteosomal degradation of RICTOR, may thereby act as a negative regulator of the mTORC2 pathway. In Homo sapiens (Human), this protein is UBX domain-containing protein 2A.